The chain runs to 269 residues: Subtilisin BL (269 aa).

Glutamine 2 provides a ligand contact to Ca(2+). The 264-residue stretch at proline 5–threonine 268 folds into the Peptidase S8 domain. Aspartate 32 (charge relay system) is an active-site residue. Aspartate 40 serves as a coordination point for Ca(2+). Histidine 62 serves as the catalytic Charge relay system. 7 residues coordinate Ca(2+): leucine 73, asparagine 75, isoleucine 77, valine 79, alanine 163, tyrosine 165, and alanine 168. Serine 215 functions as the Charge relay system in the catalytic mechanism.

The protein belongs to the peptidase S8 family. Requires Ca(2+) as cofactor.

The protein localises to the secreted. The catalysed reaction is Hydrolysis of proteins with broad specificity for peptide bonds, and a preference for a large uncharged residue in P1. Hydrolyzes peptide amides.. Its function is as follows. Subtilisin is an extracellular alkaline serine protease, it catalyzes the hydrolysis of proteins and peptide amides. This is Subtilisin BL from Lederbergia lenta (Bacillus lentus).